Consider the following 449-residue polypeptide: MKKITKFKDQKILVLGLARSGMAAALVLNELGAIVTVNDGKPFEENKEAQVLLEEGIKVITGSHPIDLLDEDFALMVKNPGIRYDNPMVERAEALKIPVITEVELAYLVSEAPIIGITGTNGKTTTTTLIADILNADGQSAKLSGNIGFPASEVAQKAQATDTLVMELSSFQLMGIDTFRPKIALITNLFSAHLDYHGSQEAYEAAKWRIQENMTADDFLILNFNQEKCRKLADKTKATVLAFSTKEKVSGAYVNEGKIYFKDEFIMEASELSLPGDHNLENALAAIVASKLRGAENEAIVEVLTSFAGVKHRLQYLGEIDGRKVYNDSKATNILATQKALSGFDNSKLWLLAGGLDRGNGFEDLEKDLEDLKGMVVFGQTADKLRLMAEKLNIPVFASQNVATALKEIMPQTQVGDTILLSPACASWDQYKTFEERGDLFIEAFESLK.

119-125 (GTNGKTT) contributes to the ATP binding site.

This sequence belongs to the MurCDEF family.

The protein localises to the cytoplasm. It catalyses the reaction UDP-N-acetyl-alpha-D-muramoyl-L-alanine + D-glutamate + ATP = UDP-N-acetyl-alpha-D-muramoyl-L-alanyl-D-glutamate + ADP + phosphate + H(+). It functions in the pathway cell wall biogenesis; peptidoglycan biosynthesis. Functionally, cell wall formation. Catalyzes the addition of glutamate to the nucleotide precursor UDP-N-acetylmuramoyl-L-alanine (UMA). The polypeptide is UDP-N-acetylmuramoylalanine--D-glutamate ligase (Lactococcus lactis subsp. cremoris (strain MG1363)).